The primary structure comprises 101 residues: Movement protein (101 aa).

A helical membrane pass occupies residues 30–50; it reads EVAILSFVALICIYLLYLWVL. The tract at residues 80 to 101 is disordered; the sequence is PIPNTLEPTAPVHPGPFVPGQG. The span at 90 to 101 shows a compositional bias: pro residues; the sequence is PVHPGPFVPGQG.

The protein belongs to the mastrevirus movement protein family. Interacts with the capsid protein (CP). Part of a MP-CP-viral DNA complex.

The protein resides in the host membrane. Involved in the viral transport within, and between cells. The protein is Movement protein of Avena sativa (Oat).